The sequence spans 250 residues: uncharacterized protein (250 aa).

This is an uncharacterized protein from Rickettsia prowazekii (strain Madrid E).